A 64-amino-acid chain; its full sequence is Large ribosomal subunit protein uL29 (64 aa).

Belongs to the universal ribosomal protein uL29 family.

This Levilactobacillus brevis (strain ATCC 367 / BCRC 12310 / CIP 105137 / JCM 1170 / LMG 11437 / NCIMB 947 / NCTC 947) (Lactobacillus brevis) protein is Large ribosomal subunit protein uL29.